Reading from the N-terminus, the 501-residue chain is Tetrachloroethene reductive dehalogenase (501 aa).

The segment at residues 1-37 is a signal peptide (tat-type signal); it reads MEKKKKPELSRRDFGKLIIGGGAAATIAPFGVPGANA. Residues Ala74, Tyr207, 309–314, 329–332, and 341–343 each bind corrinoid; these read NGVGQS, MGAC, and VRL. Residues 356 to 386 form the 4Fe-4S ferredoxin-type 1 domain; it reads KPIDFGVTEFCETCKKCARECPSKAITEGPR. [4Fe-4S] cluster contacts are provided by Cys366, Cys369, Cys372, and Cys376. Residue 394-401 participates in corrinoid binding; that stretch reads HNQSGKLQ. Residue Cys409 coordinates [4Fe-4S] cluster. Tyr419 is a binding site for corrinoid. [4Fe-4S] cluster-binding residues include Cys420, Cys423, and Cys427. A 4Fe-4S ferredoxin-type 2 domain is found at 420–439; that stretch reads CGVCVAVCPFTKGNIWIHDG.

Belongs to the PceA family. In terms of assembly, monomer. [4Fe-4S] cluster is required as a cofactor. Requires corrinoid as cofactor. Post-translationally, predicted to be exported by the Tat system. The position of the signal peptide cleavage has not been experimentally proven.

The protein localises to the cytoplasm. The protein resides in the cell inner membrane. The enzyme catalyses trichloroethene + chloride + A + H(+) = tetrachloroethene + AH2. It catalyses the reaction trichloroethene + AH2 = (Z)-1,2-dichloroethene + chloride + A + H(+). Both the processed and unprocessed enzymes are catalytically active. PCE-dependent growth and PceA activity are inhibited in the presence of high concentrations of 5,6-dimethylbenzimidazole (DMB), probably due to the formation a DMB-containing nor-B12 cofactor. Dechlorination of PCE is stimulated by ammonium ions. Activity is inhibited by chlorinated methanes. Its function is as follows. Catalyzes the reductive dechlorination of tetrachloroethene (PCE) to trichloroethene (TCE) and of trichloroethene to cis-1,2-dichloroethene (DCE). In addition, trans-1,3-dichloropropene, 1,1,3-trichloropropene and 2,3-dichloropropene are reduced to a mixture of mono-chloropropenes, 1,1-dichloropropene, and 2-chloropropene, respectively. Is also able to convert brominated phenols such as 4-bromophenol (4-BP), 2,4-dibromophenol (2,4-DBP) and 2,4,6-tribromophenol (2,4,6-TBP). Utilizes formate or pyruvate as electron donors. Titanium(III) citrate could also serve as electron donor. Reduced methyl viologen can act as the artificial electron donor. This chain is Tetrachloroethene reductive dehalogenase, found in Sulfurospirillum multivorans (Dehalospirillum multivorans).